Reading from the N-terminus, the 141-residue chain is Large ribosomal subunit protein uL11 (141 aa).

The protein belongs to the universal ribosomal protein uL11 family. In terms of assembly, part of the ribosomal stalk of the 50S ribosomal subunit. Interacts with L10 and the large rRNA to form the base of the stalk. L10 forms an elongated spine to which L12 dimers bind in a sequential fashion forming a multimeric L10(L12)X complex. In terms of processing, one or more lysine residues are methylated.

Forms part of the ribosomal stalk which helps the ribosome interact with GTP-bound translation factors. The polypeptide is Large ribosomal subunit protein uL11 (Roseobacter denitrificans (strain ATCC 33942 / OCh 114) (Erythrobacter sp. (strain OCh 114))).